A 567-amino-acid polypeptide reads, in one-letter code: Proline--tRNA ligase (567 aa).

Belongs to the class-II aminoacyl-tRNA synthetase family. ProS type 1 subfamily. As to quaternary structure, homodimer.

The protein resides in the cytoplasm. The catalysed reaction is tRNA(Pro) + L-proline + ATP = L-prolyl-tRNA(Pro) + AMP + diphosphate. Catalyzes the attachment of proline to tRNA(Pro) in a two-step reaction: proline is first activated by ATP to form Pro-AMP and then transferred to the acceptor end of tRNA(Pro). As ProRS can inadvertently accommodate and process non-cognate amino acids such as alanine and cysteine, to avoid such errors it has two additional distinct editing activities against alanine. One activity is designated as 'pretransfer' editing and involves the tRNA(Pro)-independent hydrolysis of activated Ala-AMP. The other activity is designated 'posttransfer' editing and involves deacylation of mischarged Ala-tRNA(Pro). The misacylated Cys-tRNA(Pro) is not edited by ProRS. The chain is Proline--tRNA ligase from Staphylococcus aureus (strain Mu3 / ATCC 700698).